Here is a 301-residue protein sequence, read N- to C-terminus: Probable enoyl-CoA hydratase 2, mitochondrial (301 aa).

The N-terminal 32 residues, 1-32 (MSFVKYLRRDNLLQLAGKPSLSRNYILQTCRT), are a transit peptide targeting the mitochondrion. Substrate is bound by residues 105-109 (AGADL) and Gly152.

It belongs to the enoyl-CoA hydratase/isomerase family.

It is found in the mitochondrion. It carries out the reaction a (3S)-3-hydroxyacyl-CoA = a (2E)-enoyl-CoA + H2O. It catalyses the reaction a 4-saturated-(3S)-3-hydroxyacyl-CoA = a (3E)-enoyl-CoA + H2O. It participates in lipid metabolism; fatty acid beta-oxidation. Straight-chain enoyl-CoA thioesters from C4 up to at least C16 are processed, although with decreasing catalytic rate. The protein is Probable enoyl-CoA hydratase 2, mitochondrial of Arabidopsis thaliana (Mouse-ear cress).